The primary structure comprises 343 residues: Glucokinase (343 aa).

18–23 (GDIGGT) lines the ATP pocket.

Belongs to the bacterial glucokinase family.

Its subcellular location is the cytoplasm. The enzyme catalyses D-glucose + ATP = D-glucose 6-phosphate + ADP + H(+). This chain is Glucokinase, found in Brucella melitensis biotype 1 (strain ATCC 23456 / CCUG 17765 / NCTC 10094 / 16M).